The following is a 151-amino-acid chain: Small ribosomal subunit protein uS15 (151 aa).

The tract at residues 1 to 20 (MARLHSGKRGSSGSTRPLRT) is disordered.

It belongs to the universal ribosomal protein uS15 family. Part of the 30S ribosomal subunit.

This chain is Small ribosomal subunit protein uS15, found in Methanococcus maripaludis (strain DSM 14266 / JCM 13030 / NBRC 101832 / S2 / LL).